The primary structure comprises 175 residues: 2-oxo-4-hydroxy-4-carboxy-5-ureidoimidazoline decarboxylase (175 aa).

The Proton donor role is filled by His-67. Substrate is bound by residues Pro-68, 84–88, and 119–123; these read SQNEQ and FVICA. Positions 173 to 175 match the Microbody targeting signal motif; it reads TKL.

It belongs to the OHCU decarboxylase family.

Its subcellular location is the peroxisome. The enzyme catalyses 5-hydroxy-2-oxo-4-ureido-2,5-dihydro-1H-imidazole-5-carboxylate + H(+) = (S)-allantoin + CO2. Its pathway is purine metabolism; urate degradation; (S)-allantoin from urate: step 3/3. Catalyzes the stereoselective decarboxylation of 2-oxo-4-hydroxy-4-carboxy-5-ureidoimidazoline (OHCU) to (S)-allantoin. The chain is 2-oxo-4-hydroxy-4-carboxy-5-ureidoimidazoline decarboxylase (urad) from Xenopus laevis (African clawed frog).